The chain runs to 483 residues: UDP-N-acetylmuramate--L-alanine ligase (483 aa).

112 to 118 provides a ligand contact to ATP; that stretch reads GTHGKTT.

It belongs to the MurCDEF family.

It localises to the cytoplasm. The enzyme catalyses UDP-N-acetyl-alpha-D-muramate + L-alanine + ATP = UDP-N-acetyl-alpha-D-muramoyl-L-alanine + ADP + phosphate + H(+). It functions in the pathway cell wall biogenesis; peptidoglycan biosynthesis. In terms of biological role, cell wall formation. The polypeptide is UDP-N-acetylmuramate--L-alanine ligase (Ralstonia nicotianae (strain ATCC BAA-1114 / GMI1000) (Ralstonia solanacearum)).